Here is a 382-residue protein sequence, read N- to C-terminus: Fimbrial usher domain-containing protein YdeT (382 aa).

The polypeptide is Fimbrial usher domain-containing protein YdeT (ydeT) (Escherichia coli (strain K12)).